We begin with the raw amino-acid sequence, 112 residues long: Cuticle protein AM1239 (112 aa).

In terms of domain architecture, Chitin-binding type R&amp;R spans 16–85; sequence DGNFNYRFET…FIPTDHPLPA (70 aa). The O-linked (HexNAc) threonine glycan is linked to threonine 79.

In terms of tissue distribution, arthrodial membrane.

The chain is Cuticle protein AM1239 from Cancer pagurus (Rock crab).